The chain runs to 479 residues: Muscarinic acetylcholine receptor M4 (479 aa).

Topologically, residues 1–31 (MANFTPVNGSSGNQSVRLVTSSSHNRYETVE) are extracellular. Residues Asn-8 and Asn-13 are each glycosylated (N-linked (GlcNAc...) asparagine). A helical membrane pass occupies residues 32 to 54 (MVFIATVTGSLSLVTVVGNILVM). The Cytoplasmic portion of the chain corresponds to 55-68 (LSIKVNRQLQTVNN). Residues 69 to 89 (YFLFSLACADLIIGAFSMNLY) form a helical membrane-spanning segment. At 90 to 106 (TVYIIKGYWPLGAVVCD) the chain is on the extracellular side. Cysteines 105 and 185 form a disulfide. Residues 107–128 (LWLALDYVVSNASVMNLLIISF) form a helical membrane-spanning segment. Residues 129–148 (DRYFCVTKPLTYPARRTTKM) are Cytoplasmic-facing. The chain crosses the membrane as a helical span at residues 149–171 (AGLMIAAAWVLSFVLWAPAILFW). Residues 172–193 (QFVVGKRTVPDNQCFIQFLSNP) are Extracellular-facing. A helical transmembrane segment spans residues 194–216 (AVTFGTAIAAFYLPVVIMTVLYI). Residues 217-401 (HISLASRSRV…AARERKVTRT (185 aa)) lie on the Cytoplasmic side of the membrane. The interval 271-333 (KLEEAPPPAL…PAPPLQPRAL (63 aa)) is disordered. Pro residues predominate over residues 275 to 286 (APPPALPPPPRP). Over residues 294–304 (NESSSGSATQN) the composition is skewed to polar residues. A helical membrane pass occupies residues 402-422 (IFAILLAFILTWTPYNVMVLV). Residues 423 to 436 (NTFCQSCIPDTVWS) lie on the Extracellular side of the membrane. Residues 437–456 (IGYWLCYVNSTINPACYALC) form a helical membrane-spanning segment. At 457–479 (NATFKKTFRHLLLCQYRNIGTAR) the chain is on the cytoplasmic side. Phosphothreonine occurs at positions 459, 463, and 477.

Belongs to the G-protein coupled receptor 1 family. Muscarinic acetylcholine receptor subfamily. CHRM4 sub-subfamily.

The protein localises to the cell membrane. It localises to the postsynaptic cell membrane. Its function is as follows. The muscarinic acetylcholine receptor mediates various cellular responses, including inhibition of adenylate cyclase, breakdown of phosphoinositides and modulation of potassium channels through the action of G proteins. Primary transducing effect is inhibition of adenylate cyclase. The sequence is that of Muscarinic acetylcholine receptor M4 (CHRM4) from Homo sapiens (Human).